A 362-amino-acid chain; its full sequence is Adenosine deaminase (362 aa).

Residues His-19 and His-21 each contribute to the Zn(2+) site. The substrate site is built by His-21, Asp-23, and Gly-181. Position 208 (His-208) interacts with Zn(2+). Glu-211 (proton donor) is an active-site residue. Asp-300 contributes to the Zn(2+) binding site.

It belongs to the metallo-dependent hydrolases superfamily. Adenosine and AMP deaminases family. Adenosine deaminase subfamily. Zn(2+) serves as cofactor.

It catalyses the reaction adenosine + H2O + H(+) = inosine + NH4(+). The catalysed reaction is 2'-deoxyadenosine + H2O + H(+) = 2'-deoxyinosine + NH4(+). Its function is as follows. Catalyzes the hydrolytic deamination of adenosine and 2-deoxyadenosine. The protein is Adenosine deaminase of Mycobacteroides abscessus (strain ATCC 19977 / DSM 44196 / CCUG 20993 / CIP 104536 / JCM 13569 / NCTC 13031 / TMC 1543 / L948) (Mycobacterium abscessus).